Consider the following 92-residue polypeptide: N(2)-fixation sustaining protein CowN (92 aa).

Belongs to the CowN family.

Its function is as follows. Is required to sustain N(2)-dependent growth in the presence of low levels of carbon monoxide (CO). Probably acts by protecting the N(2) fixation ability of the nitrogenase complex, which is inactivated in the presence of CO. The protein is N(2)-fixation sustaining protein CowN of Rhodobacter capsulatus (strain ATCC BAA-309 / NBRC 16581 / SB1003).